A 227-amino-acid chain; its full sequence is Orotidine 5'-phosphate decarboxylase (227 aa).

Residues Asp-8, Lys-30, 59–68 (DLKLYDIPYT), Thr-118, Arg-178, Gln-187, Gly-207, and Arg-208 each bind substrate. The active-site Proton donor is Lys-61.

This sequence belongs to the OMP decarboxylase family. Type 1 subfamily. In terms of assembly, homodimer.

The catalysed reaction is orotidine 5'-phosphate + H(+) = UMP + CO2. It participates in pyrimidine metabolism; UMP biosynthesis via de novo pathway; UMP from orotate: step 2/2. Functionally, catalyzes the decarboxylation of orotidine 5'-monophosphate (OMP) to uridine 5'-monophosphate (UMP). The sequence is that of Orotidine 5'-phosphate decarboxylase from Helicobacter pylori (strain Shi470).